The following is an 868-amino-acid chain: Paladin (868 aa).

G2 carries the N-myristoyl glycine lipid modification.

It belongs to the paladin family.

The protein localises to the cytoplasm. The protein resides in the cytosol. The protein is Paladin (PALD1) of Gallus gallus (Chicken).